Here is a 100-residue protein sequence, read N- to C-terminus: MAKKSLIYREKKRQKLEQKYHLIRRSSKKEISQIPSLSEKWKIHGKLQSPPRNSAPTRLHRRCFSTGRPRANYRDFGLSGHILREMVHACLLPGATRSSW.

This sequence belongs to the universal ribosomal protein uS14 family. As to quaternary structure, part of the 30S ribosomal subunit.

It is found in the plastid. The protein resides in the chloroplast. Functionally, binds 16S rRNA, required for the assembly of 30S particles. The protein is Small ribosomal subunit protein uS14c of Arabis hirsuta (Hairy rock-cress).